We begin with the raw amino-acid sequence, 428 residues long: UDP-N-acetylglucosamine 1-carboxyvinyltransferase 2 (428 aa).

22–23 serves as a coordination point for phosphoenolpyruvate; that stretch reads KN. R92 lines the UDP-N-acetyl-alpha-D-glucosamine pocket. C116 (proton donor) is an active-site residue. C116 bears the 2-(S-cysteinyl)pyruvic acid O-phosphothioketal mark. UDP-N-acetyl-alpha-D-glucosamine-binding positions include 121-125, D304, and I326; that span reads RPIDQ.

The protein belongs to the EPSP synthase family. MurA subfamily.

It is found in the cytoplasm. The enzyme catalyses phosphoenolpyruvate + UDP-N-acetyl-alpha-D-glucosamine = UDP-N-acetyl-3-O-(1-carboxyvinyl)-alpha-D-glucosamine + phosphate. It functions in the pathway cell wall biogenesis; peptidoglycan biosynthesis. Its function is as follows. Cell wall formation. Adds enolpyruvyl to UDP-N-acetylglucosamine. The chain is UDP-N-acetylglucosamine 1-carboxyvinyltransferase 2 from Geobacillus kaustophilus (strain HTA426).